Reading from the N-terminus, the 1361-residue chain is MEHYLRSVHNSPTLSMISAARGLSPAEVAHEHLKERGIYGLAPPPPPGTTPTEYCHQMAFLASHASPYGELLVQSAAAGNTSHLHDYLTPMDVSRFSSPRVTPRLSRKRALSISPLSDASIDLQTMIRTSPNSLVAYINNSRSSSAASGSYGHLSAGAISPAFSFPIHKPCSLSAALSQQRSLSSSFGHTPLLHPSPTFASRQQGALTSANPAPPSNNSSAPDSVLNKVSSESAVSSTVNQVIHKRSKVKTEEEADSVRFPQPPDHLTDLKEDLDKDECKQEPEHIYETNCHWDGCSKEFDTQDQLVHHINNDHIHGEKKEFVCRWQDCSREQKPFKAQYMLVVHMRRHTGEKPHKCTFEGCFKAYSRLENLKTHLRSHTGEKPYVCDHEGCNKAFSNASDRAKHQNRTHSNEKPYICKVPGCTKRYTDPSSLRKHVKTVHGPEAHVTKKHRNDIIQKPSLPKENGDNEASAKLSGREHSDSVSRDQEHCLQTRTIKTEDNMMHQSSPGGQSSCSSEPSPYGNTNNIDSGVDVSLAWQGSLGDLFGLEETSPVVDSTVSSWQRSGRPATPETQRIHSAETGTAEEREIKDNERFLLIYEPNATCQNTRLPTISANGFDVIGVPSSVLINPRAIELSMNDVTMMNQLNERRDSTSSTLSSAYTSRRSSGISPYFSSRRSSETSQFGGRLNNSSSADSYDPISTDASRRSSEASQHSGLPNLLNLTPAQHYRLKAKYAAATGGPPPTPLPNMDRIGLRNKLSLMDGADFPLPPFRQLPVPRRCSDGGGNAGLTPMYPHEIPGNNSRRASDPVRRTAGIDDKPLPRFSRFHSMNSMNTLHPPSLSERRNGGLQHYTCSDGGLHRHVYSPRPPSISENVAMEAISCDADVPGGDDDLMLPDDVVQYIRSQNREAPEQNLQTEYSSPARNLQSNTKSFHNNTPEQPRAPGAYLSRNFPALAECLGQTANMQDNNMPVQWNEVSSGTVDVSDLPKQQFAAGNLAVVQQKQNFAQYQSFNQAPMQRAHNIMGQGQESVQRNISVNGQRFNYLQQRQQQMSQCQIVSSDFIPQQRYSQSQSMLSSRAMQEGQSQISPSCNNMVERPGVHTHAAPSNTLNHQRLAVHGAPTQGFANNFSVNQDGLHPPNAYTVQPQKNGLEPQQNTLGMSGQAFNHGMIQPRPPAAPHPPNRPRNIHPVHHPPYMRSPHPVSELSPGQQTAEATPKRTSENTDPTPKDNNLLYYSGQIHMYEPNGNFGSGIDCTVRQLPTMPSPGANQVTSTVDSQGLEHPPVIDFDAMMDDGDHSSLMSGTLSPGLLQSFSQTSSRLTTPRNSLTLPSIPAGINNMAIGDMSSMLTTLAEESKFLNLMS.

A disordered region spans residues 185–270; the sequence is SSFGHTPLLH…PQPPDHLTDL (86 aa). Polar residues-rich tracts occupy residues 198-208 and 227-241; these read TFASRQQGALT and NKVS…TVNQ. 5 consecutive C2H2-type zinc fingers follow at residues 289-314, 322-349, 355-379, 385-410, and 416-441; these read TNCH…NNDH, FVCR…MRRH, HKCT…LRSH, YVCD…NRTH, and YICK…KTVH. 6 disordered regions span residues 434-527, 556-584, 647-720, 787-832, 906-946, and 1134-1230; these read RKHV…TNNI, STVS…GTAE, NERR…LPNL, NAGL…SMNS, QNRE…APGA, and DGLH…PKDN. A compositionally biased stretch (basic and acidic residues) spans 475–502; it reads SGREHSDSVSRDQEHCLQTRTIKTEDNM. Over residues 506–522 the composition is skewed to low complexity; sequence SSPGGQSSCSSEPSPYG. A compositionally biased stretch (basic and acidic residues) spans 573–584; that stretch reads QRIHSAETGTAE. A compositionally biased stretch (low complexity) spans 653-670; sequence TSSTLSSAYTSRRSSGIS. 2 stretches are compositionally biased toward polar residues: residues 672-695 and 710-720; these read YFSS…SSAD and EASQHSGLPNL. Basic and acidic residues predominate over residues 805 to 821; the sequence is RASDPVRRTAGIDDKPL. Polar residues-rich tracts occupy residues 913–939 and 1142–1164; these read QNLQ…NTPE and YTVQ…SGQA. Over residues 1172–1183 the composition is skewed to pro residues; the sequence is PRPPAAPHPPNR.

Belongs to the GLI C2H2-type zinc-finger protein family.

The protein resides in the nucleus. In terms of biological role, has an essential role in the early embryonic patterning of mesoderm and neuroectoderm. The sequence is that of Zinc finger protein GLI4 (gli4) from Xenopus laevis (African clawed frog).